The primary structure comprises 224 residues: Uridylate kinase (224 aa).

Residue 9–10 (GS) coordinates ATP. UMP is bound at residue Gly43. Gly44 and Arg48 together coordinate ATP. UMP-binding positions include Asp65 and 113–119 (TEPAHST). ATP is bound by residues Thr139, Tyr145, and Asp148.

It belongs to the UMP kinase family. In terms of assembly, homohexamer.

It localises to the cytoplasm. It catalyses the reaction UMP + ATP = UDP + ADP. It functions in the pathway pyrimidine metabolism; CTP biosynthesis via de novo pathway; UDP from UMP (UMPK route): step 1/1. With respect to regulation, inhibited by UTP. Functionally, catalyzes the reversible phosphorylation of UMP to UDP. The polypeptide is Uridylate kinase (Methanothermobacter thermautotrophicus (strain ATCC 29096 / DSM 1053 / JCM 10044 / NBRC 100330 / Delta H) (Methanobacterium thermoautotrophicum)).